The primary structure comprises 450 residues: UDP-N-acetylmuramoylalanine--D-glutamate ligase (450 aa).

Position 119–125 (119–125) interacts with ATP; that stretch reads GSNGKTT.

It belongs to the MurCDEF family.

Its subcellular location is the cytoplasm. The catalysed reaction is UDP-N-acetyl-alpha-D-muramoyl-L-alanine + D-glutamate + ATP = UDP-N-acetyl-alpha-D-muramoyl-L-alanyl-D-glutamate + ADP + phosphate + H(+). It participates in cell wall biogenesis; peptidoglycan biosynthesis. Cell wall formation. Catalyzes the addition of glutamate to the nucleotide precursor UDP-N-acetylmuramoyl-L-alanine (UMA). The polypeptide is UDP-N-acetylmuramoylalanine--D-glutamate ligase (Bacillus cereus (strain B4264)).